A 263-amino-acid chain; its full sequence is Large ribosomal subunit protein uL10m (263 aa).

The transit peptide at 1–29 (MPFSVEVEVFFLLVEDKLGWLPTLQPVRH) directs the protein to the mitochondrion. The segment at 241 to 263 (QHEGDCATSTEGKPHPPDPAPDS) is disordered.

Belongs to the universal ribosomal protein uL10 family. In terms of assembly, component of the mitochondrial ribosome large subunit (39S) which comprises a 16S rRNA and about 50 distinct proteins.

The protein localises to the mitochondrion. This chain is Large ribosomal subunit protein uL10m (Mrpl10), found in Rattus norvegicus (Rat).